The following is a 96-amino-acid chain: Co-chaperonin GroES (96 aa).

This sequence belongs to the GroES chaperonin family. Heptamer of 7 subunits arranged in a ring. Interacts with the chaperonin GroEL.

It is found in the cytoplasm. Its function is as follows. Together with the chaperonin GroEL, plays an essential role in assisting protein folding. The GroEL-GroES system forms a nano-cage that allows encapsulation of the non-native substrate proteins and provides a physical environment optimized to promote and accelerate protein folding. GroES binds to the apical surface of the GroEL ring, thereby capping the opening of the GroEL channel. The protein is Co-chaperonin GroES of Shewanella amazonensis (strain ATCC BAA-1098 / SB2B).